Reading from the N-terminus, the 329-residue chain is Vanillate O-demethylase oxygenase subunit (329 aa).

The 84-residue stretch at 1 to 84 (MICNERMVIY…AQERHGFIWV (84 aa)) folds into the Rieske domain. [2Fe-2S] cluster contacts are provided by Cys24, His26, Cys43, and His46.

It belongs to the bacterial ring-hydroxylating dioxygenase alpha subunit family. In terms of assembly, this demethylase system consists of two proteins: an oxygenase and an oxygenase reductase. It depends on [2Fe-2S] cluster as a cofactor. The cofactor is Fe cation.

It carries out the reaction vanillate + NADH + O2 + H(+) = 3,4-dihydroxybenzoate + formaldehyde + NAD(+) + H2O. Its pathway is xenobiotic degradation; vanillyl-alcohol degradation. The protein is Vanillate O-demethylase oxygenase subunit (vanA) of Pseudomonas sp. (strain ATCC 19151).